We begin with the raw amino-acid sequence, 556 residues long: Formate--tetrahydrofolate ligase (556 aa).

65-72 is a binding site for ATP; that stretch reads TPAGEGKS.

Belongs to the formate--tetrahydrofolate ligase family.

The enzyme catalyses (6S)-5,6,7,8-tetrahydrofolate + formate + ATP = (6R)-10-formyltetrahydrofolate + ADP + phosphate. Its pathway is one-carbon metabolism; tetrahydrofolate interconversion. This chain is Formate--tetrahydrofolate ligase, found in Streptococcus agalactiae serotype V (strain ATCC BAA-611 / 2603 V/R).